The primary structure comprises 255 residues: 4-hydroxy-tetrahydrodipicolinate reductase (255 aa).

Residues 9–14, 89–91, and 115–118 contribute to the NAD(+) site; these read GFKGKM, GTT, and APNF. The active-site Proton donor/acceptor is His-145. His-146 provides a ligand contact to (S)-2,3,4,5-tetrahydrodipicolinate. The active-site Proton donor is the Lys-149. Residue 155 to 156 participates in (S)-2,3,4,5-tetrahydrodipicolinate binding; it reads GT.

It belongs to the DapB family.

Its subcellular location is the cytoplasm. It carries out the reaction (S)-2,3,4,5-tetrahydrodipicolinate + NAD(+) + H2O = (2S,4S)-4-hydroxy-2,3,4,5-tetrahydrodipicolinate + NADH + H(+). It catalyses the reaction (S)-2,3,4,5-tetrahydrodipicolinate + NADP(+) + H2O = (2S,4S)-4-hydroxy-2,3,4,5-tetrahydrodipicolinate + NADPH + H(+). It participates in amino-acid biosynthesis; L-lysine biosynthesis via DAP pathway; (S)-tetrahydrodipicolinate from L-aspartate: step 4/4. Catalyzes the conversion of 4-hydroxy-tetrahydrodipicolinate (HTPA) to tetrahydrodipicolinate. This is 4-hydroxy-tetrahydrodipicolinate reductase from Streptococcus suis (strain 98HAH33).